Reading from the N-terminus, the 55-residue chain is Ribosome modulation factor (55 aa).

This sequence belongs to the ribosome modulation factor family. As to quaternary structure, associates exclusively with 100S ribosomes.

The protein localises to the cytoplasm. Its function is as follows. During stationary phase, converts 70S ribosomes to an inactive dimeric form (100S ribosomes). May form immature 90S particles, which are converted to mature 100S ribosomes by the hibernation promoting factor Hpf. The protein is Ribosome modulation factor of Escherichia coli O157:H7.